A 336-amino-acid chain; its full sequence is Phosphate acyltransferase (336 aa).

This sequence belongs to the PlsX family. As to quaternary structure, homodimer. Probably interacts with PlsY.

The protein localises to the cytoplasm. The enzyme catalyses a fatty acyl-[ACP] + phosphate = an acyl phosphate + holo-[ACP]. It functions in the pathway lipid metabolism; phospholipid metabolism. Catalyzes the reversible formation of acyl-phosphate (acyl-PO(4)) from acyl-[acyl-carrier-protein] (acyl-ACP). This enzyme utilizes acyl-ACP as fatty acyl donor, but not acyl-CoA. This is Phosphate acyltransferase from Dictyoglomus thermophilum (strain ATCC 35947 / DSM 3960 / H-6-12).